Here is a 462-residue protein sequence, read N- to C-terminus: tRNA modification GTPase MnmE (462 aa).

The (6S)-5-formyl-5,6,7,8-tetrahydrofolate site is built by Arg22, Glu87, and Arg126. Residues 220 to 382 (GLKVAIVGRP…LARKVQEIVL (163 aa)) enclose the TrmE-type G domain. Position 230 (Asn230) interacts with K(+). GTP contacts are provided by residues 230–235 (NVGKSS), 249–255 (SNIPGTT), and 274–277 (DTAG). Ser234 contacts Mg(2+). Residues Ser249, Ile251, and Thr254 each contribute to the K(+) site. Thr255 is a binding site for Mg(2+). Lys462 contributes to the (6S)-5-formyl-5,6,7,8-tetrahydrofolate binding site.

This sequence belongs to the TRAFAC class TrmE-Era-EngA-EngB-Septin-like GTPase superfamily. TrmE GTPase family. As to quaternary structure, homodimer. Heterotetramer of two MnmE and two MnmG subunits. The cofactor is K(+).

It is found in the cytoplasm. Exhibits a very high intrinsic GTPase hydrolysis rate. Involved in the addition of a carboxymethylaminomethyl (cmnm) group at the wobble position (U34) of certain tRNAs, forming tRNA-cmnm(5)s(2)U34. This Moorella thermoacetica (strain ATCC 39073 / JCM 9320) protein is tRNA modification GTPase MnmE.